The chain runs to 449 residues: Tapasin (449 aa).

A signal peptide spans 1–20; sequence MKPLSLLLAVASALGTAVSA. Topologically, residues 21-413 are lumenal; that stretch reads GPAVIECWMV…GLSGPSLEDS (393 aa). The cysteines at positions 27 and 91 are disulfide-linked. Asn253 carries N-linked (GlcNAc...) asparagine glycosylation. In terms of domain architecture, Ig-like C1-type spans 292 to 399; the sequence is PKISLTPAPL…PTLGRSAEVT (108 aa). The cysteines at positions 315 and 382 are disulfide-linked. The helical transmembrane segment at 414–434 threads the bilayer; sequence VGLFLSAFLLLGLIKALGWVA. At 435–449 the chain is on the cytoplasmic side; sequence ASRSTSKDPKEKKAQ.

In terms of assembly, heterodimer with PDIA3; disulfide-linked. Obligatory mediator for the interaction between newly assembled MHC class I molecules, calreticulin, PDIA3 and TAP. Up to 4 MHC class I/tapasin complexes bind to 1 TAP. Interacts with HLA-G-B2M complex; this interaction is required for loading of high affinity peptides. On its own or as part of MHC class I peptide loading complex, interacts with ligand-free MR1 or MR1-B2M complex, providing for stable MR1 pools ready for metabolite antigen processing.

The protein localises to the endoplasmic reticulum membrane. Functionally, involved in the association of MHC class I with transporter associated with antigen processing (TAP) and in the assembly of MHC class I with peptide (peptide loading). The protein is Tapasin (TAPBP) of Canis lupus familiaris (Dog).